Reading from the N-terminus, the 154-residue chain is Superoxide dismutase [Cu-Zn] (154 aa).

Histidine 47, histidine 49, and histidine 64 together coordinate Cu cation. A disulfide bond links cysteine 58 and cysteine 147. Histidine 64, histidine 72, histidine 81, and aspartate 84 together coordinate Zn(2+). Histidine 121 provides a ligand contact to Cu cation. Residues 124–137 (TDDLGRGDSEESKK) are compositionally biased toward basic and acidic residues. The disordered stretch occupies residues 124 to 144 (TDDLGRGDSEESKKTGNAGAR). Arginine 144 contacts substrate.

This sequence belongs to the Cu-Zn superoxide dismutase family. Homodimer. It depends on Cu cation as a cofactor. Zn(2+) is required as a cofactor.

The protein localises to the cytoplasm. It carries out the reaction 2 superoxide + 2 H(+) = H2O2 + O2. Destroys radicals which are normally produced within the cells and which are toxic to biological systems. The polypeptide is Superoxide dismutase [Cu-Zn] (sodA) (Emericella nidulans (strain FGSC A4 / ATCC 38163 / CBS 112.46 / NRRL 194 / M139) (Aspergillus nidulans)).